The sequence spans 321 residues: Glucokinase (321 aa).

8-13 serves as a coordination point for ATP; that stretch reads GDVGGT.

The protein belongs to the bacterial glucokinase family.

It is found in the cytoplasm. The catalysed reaction is D-glucose + ATP = D-glucose 6-phosphate + ADP + H(+). The protein is Glucokinase of Tolumonas auensis (strain DSM 9187 / NBRC 110442 / TA 4).